Consider the following 470-residue polypeptide: Uronate isomerase (470 aa).

This sequence belongs to the metallo-dependent hydrolases superfamily. Uronate isomerase family.

The catalysed reaction is D-glucuronate = D-fructuronate. It carries out the reaction aldehydo-D-galacturonate = keto-D-tagaturonate. The protein operates within carbohydrate metabolism; pentose and glucuronate interconversion. The chain is Uronate isomerase from Shigella boydii serotype 4 (strain Sb227).